The following is a 143-amino-acid chain: Large ribosomal subunit protein uL15 (143 aa).

Positions 1 to 45 (MLLNTVQPGVGAKHAKRRVGRGIGSGLGKTCGRGHKGQKSRAGGF) are disordered. Residues 21-31 (RGIGSGLGKTC) show a composition bias toward gly residues.

This sequence belongs to the universal ribosomal protein uL15 family. As to quaternary structure, part of the 50S ribosomal subunit.

Its function is as follows. Binds to the 23S rRNA. This chain is Large ribosomal subunit protein uL15, found in Chromobacterium violaceum (strain ATCC 12472 / DSM 30191 / JCM 1249 / CCUG 213 / NBRC 12614 / NCIMB 9131 / NCTC 9757 / MK).